Consider the following 72-residue polypeptide: Probable movement protein p8 (72 aa).

Residues 16–58 are disordered; sequence GRARSVEGKKHNGSGLTGVKRHAVSETSQKSQQGTGNGTMTNI. A compositionally biased stretch (polar residues) spans 40-58; sequence SETSQKSQQGTGNGTMTNI.

The protein belongs to the carmovirus/necrovirus/panicovirus movement protein p8 family.

Functionally, cell-to-cell movement. The polypeptide is Probable movement protein p8 (Tobacco necrosis virus (strain A) (TNV-A)).